We begin with the raw amino-acid sequence, 196 residues long: MFFLSKYKLFLDCAYKTLNIIILEMKTNAVVDELSIGVEQNLTELAVYYLETMLTKNKLKKSSIKQFYVTIGPGSFTGQRIATIIAKSWCLLYPSCELYALNSLRFQIPYEHGISKISCGNDQNYCGLYSQTTSEIKLISKADFVKLCKANNELPMYENFENIESYSKLLLSNIDHFERIEDPLTLQPIYLKDPVN.

This is an uncharacterized protein from Mycoplasma genitalium (strain ATCC 33530 / DSM 19775 / NCTC 10195 / G37) (Mycoplasmoides genitalium).